Here is a 251-residue protein sequence, read N- to C-terminus: MRMDKSEKRSNLADNFLYMLEFMVDDLLITRPNLCAPEEYPTCTEITFRSVFLNIRDRENGSCVNPCSPKCGKCTLFTLESPITDEDVMHIHVYKKRTESCKFLLGLTELPMKPIFDRVKKEFYSQNINWESNVESHLSRMPKLRGPCKKANDCVCYERNRERREQWCPTSELTKRMLPLFNLCKMQTGNIVLILRLVCNGPSVVSSFPVQRPVCKDPCNCCCPCPPTWPAPCSSPFDPCDPCKTVPAKKT.

As to quaternary structure, interacts with srp (via GATA-type Zn-finger domain); this interaction enhances srp binding to the promoter of crq/croquemort.

Its subcellular location is the nucleus. Transcriptional cofactor involved in efferocytosis. Together with srp mediates expression of the phagocytic receptor crq/croquemort in response to apoptotic cells, and is up-regulated by crq/croquemort in a positive feedback mechanism. Involved in macrophage engulfment and clearance of apoptotic cells during embryogenesis. In Drosophila melanogaster (Fruit fly), this protein is Transcriptional cofactor Bfc.